We begin with the raw amino-acid sequence, 680 residues long: DNA-directed RNA polymerase subunit beta' (680 aa).

4 residues coordinate Zn(2+): Cys-69, Cys-71, Cys-87, and Cys-90. The Mg(2+) site is built by Asp-489, Asp-491, and Asp-493.

It belongs to the RNA polymerase beta' chain family. RpoC1 subfamily. In terms of assembly, in plastids the minimal PEP RNA polymerase catalytic core is composed of four subunits: alpha, beta, beta', and beta''. When a (nuclear-encoded) sigma factor is associated with the core the holoenzyme is formed, which can initiate transcription. Mg(2+) serves as cofactor. Requires Zn(2+) as cofactor.

It localises to the plastid. Its subcellular location is the chloroplast. It carries out the reaction RNA(n) + a ribonucleoside 5'-triphosphate = RNA(n+1) + diphosphate. Its function is as follows. DNA-dependent RNA polymerase catalyzes the transcription of DNA into RNA using the four ribonucleoside triphosphates as substrates. The protein is DNA-directed RNA polymerase subunit beta' of Amborella trichopoda.